The chain runs to 93 residues: Small hydrophobic protein (93 aa).

2 consecutive transmembrane segments (helical) span residues 5–25 (LIII…VLAY) and 32–52 (AFGP…IYFP).

It localises to the membrane. This Tupaia virus (isolate Tupaia/Thailand/-/1986) (TUPV) protein is Small hydrophobic protein.